A 499-amino-acid chain; its full sequence is Putative protease Do-like 12, mitochondrial (499 aa).

A mitochondrion-targeting transit peptide spans 1-24; the sequence is MLFRSCVGMVSRYSRALLPTITIS. The serine protease stretch occupies residues 94–259; it reads GGSGFAIAGK…IPTPIIRHFI (166 aa). Residues H110, D144, and S222 each act as charge relay system in the active site. The 85-residue stretch at 272-356 folds into the PDZ domain; it reads GSLVLSCQSM…DENILVKVLR (85 aa).

It belongs to the peptidase S1C family.

It localises to the mitochondrion matrix. Functionally, putative serine protease. In Arabidopsis thaliana (Mouse-ear cress), this protein is Putative protease Do-like 12, mitochondrial (DEGP12).